Consider the following 334-residue polypeptide: Cytosolic Fe-S cluster assembly factor NBP35 (334 aa).

[4Fe-4S] cluster contacts are provided by C33, C47, C50, and C56. 86–93 contacts ATP; that stretch reads GKGGVGKS. C259 and C262 together coordinate [4Fe-4S] cluster.

This sequence belongs to the Mrp/NBP35 ATP-binding proteins family. NUBP1/NBP35 subfamily. In terms of assembly, heterotetramer of 2 NBP35 and 2 CFD1 chains. Requires [4Fe-4S] cluster as cofactor.

Its subcellular location is the cytoplasm. The protein localises to the nucleus. Functionally, component of the cytosolic iron-sulfur (Fe/S) protein assembly (CIA) machinery. Required for maturation of extramitochondrial Fe-S proteins. The NBP35-CFD1 heterotetramer forms a Fe-S scaffold complex, mediating the de novo assembly of an Fe-S cluster and its transfer to target apoproteins. Required for biogenesis and export of both ribosomal subunits, which may reflect a role in assembly of the Fe/S clusters in RLI1, a protein which performs rRNA processing and ribosome export. This Candida glabrata (strain ATCC 2001 / BCRC 20586 / JCM 3761 / NBRC 0622 / NRRL Y-65 / CBS 138) (Yeast) protein is Cytosolic Fe-S cluster assembly factor NBP35.